The chain runs to 238 residues: 7-cyano-7-deazaguanine synthase (238 aa).

14 to 24 provides a ligand contact to ATP; sequence FSGGQDSTTCL. The Zn(2+) site is built by C195, C204, C207, and C210.

The protein belongs to the QueC family. The cofactor is Zn(2+).

The enzyme catalyses 7-carboxy-7-deazaguanine + NH4(+) + ATP = 7-cyano-7-deazaguanine + ADP + phosphate + H2O + H(+). It participates in purine metabolism; 7-cyano-7-deazaguanine biosynthesis. Catalyzes the ATP-dependent conversion of 7-carboxy-7-deazaguanine (CDG) to 7-cyano-7-deazaguanine (preQ(0)). This chain is 7-cyano-7-deazaguanine synthase, found in Baumannia cicadellinicola subsp. Homalodisca coagulata.